Here is a 139-residue protein sequence, read N- to C-terminus: GSK3B-interacting protein (139 aa).

The interval 41-45 (VNDVL) is required for PRKAR2A interaction; contributes to a protective effect against H(2)O(2)-induced apoptosis. The interval 115–139 (SPAYREAFGNALLQRLEALKRDGQS) is interaction with GSK3B and acts as a GSK3B inhibitor.

The protein belongs to the GSKIP family. As to quaternary structure, forms a complex composed of PRKAR2A or PRKAR2B, GSK3B and GSKIP through GSKIP interaction; facilitates PKA-induced phosphorylation of GSK3B leading to GSK3B inactivation; recruits DNM1L through GSK3B for PKA-mediated phosphorylation of DNM1L; promotes beta-catenin degradation through GSK3B-induced phosphorylation of beta-catenin; stabilizes beta-catenin and enhances Wnt-induced signaling through PKA-induced phosphorylation of beta-catenin. Interacts with GSK3B; induces GSK3B-mediated phosphorylation of GSKIP and inhibits GSK3B kinase activity. In terms of processing, phosphorylated by GSK3B.

The protein resides in the cytoplasm. It localises to the nucleus. In terms of biological role, A-kinase anchoring protein for GSK3B and PKA that regulates or facilitates their kinase activity towards their targets. The ternary complex enhances Wnt-induced signaling by facilitating the GSK3B- and PKA-induced phosphorylation of beta-catenin leading to beta-catenin degradation and stabilization respectively. Upon cAMP activation, the ternary complex contributes to neuroprotection against oxidative stress-induced apoptosis by facilitating the PKA-induced phosphorylation of DML1 and PKA-induced inactivation of GSK3B. During neurite outgrowth promotes neuron proliferation; while increases beta-catenin-induced transcriptional activity through GSK3B kinase activity inhibition, reduces N-cadherin level to promote cell cycle progression. May play a role in cleft palate formation and is required for postnatal life through modulation of the activity of GSK3B during development. In Mus musculus (Mouse), this protein is GSK3B-interacting protein.